The primary structure comprises 156 residues: Small ribosomal subunit protein uS7 (156 aa).

The protein belongs to the universal ribosomal protein uS7 family. Part of the 30S ribosomal subunit. Contacts proteins S9 and S11.

Functionally, one of the primary rRNA binding proteins, it binds directly to 16S rRNA where it nucleates assembly of the head domain of the 30S subunit. Is located at the subunit interface close to the decoding center, probably blocks exit of the E-site tRNA. The chain is Small ribosomal subunit protein uS7 from Shewanella woodyi (strain ATCC 51908 / MS32).